A 122-amino-acid chain; its full sequence is Phycocyanin PC645 alpha-2 subunit (122 aa).

Positions 54 and 68 each coordinate (2R,3E)-phycocyanobilin. Residues cysteine 70, lysine 76, glutamate 77, and cysteine 92 each coordinate mesobiliverdin.

It belongs to the phycoerythrin family. Heterotetramer of 2 different alpha chains and 2 identical beta chains which form 2 alpha-beta heterodimers within the heterotetramer. Post-translationally, contains two phycocyanobilin chromophores and one mesobiliverdin chromophore with binding mediated by both the alpha and beta subunits.

Its subcellular location is the plastid. The protein resides in the chloroplast thylakoid membrane. In terms of biological role, light-harvesting photosynthetic tetrapyrrole chromophore-protein from the phycobiliprotein complex. The chain is Phycocyanin PC645 alpha-2 subunit from Chroomonas sp. (strain CCMP270).